A 488-amino-acid chain; its full sequence is Glutamyl-tRNA(Gln) amidotransferase subunit A (488 aa).

Residues lysine 76 and serine 151 each act as charge relay system in the active site. Serine 175 serves as the catalytic Acyl-ester intermediate.

It belongs to the amidase family. GatA subfamily. As to quaternary structure, heterotrimer of A, B and C subunits.

The catalysed reaction is L-glutamyl-tRNA(Gln) + L-glutamine + ATP + H2O = L-glutaminyl-tRNA(Gln) + L-glutamate + ADP + phosphate + H(+). In terms of biological role, allows the formation of correctly charged Gln-tRNA(Gln) through the transamidation of misacylated Glu-tRNA(Gln) in organisms which lack glutaminyl-tRNA synthetase. The reaction takes place in the presence of glutamine and ATP through an activated gamma-phospho-Glu-tRNA(Gln). This Symbiobacterium thermophilum (strain DSM 24528 / JCM 14929 / IAM 14863 / T) protein is Glutamyl-tRNA(Gln) amidotransferase subunit A.